The following is an 856-amino-acid chain: cGMP-dependent protein kinase (856 aa).

The segment at 1–33 (MDDDEIIPKKNHPSNERNKKKAILSHEDFTGED) is autoinhibitory segment. CNMP-binding domain regions lie at residues 62–177 (VCST…FIDS), 180–279 (VFDM…VVLG), 299–402 (IFKQ…LGNN), and 422–521 (IFRY…LQII). Residues Lys117, Gly126, Glu127, Ala129, Arg136, and Ser137 each contribute to the 3',5'-cyclic GMP site. Arg477, Gly486, Glu487, Ala489, Arg496, and Thr497 together coordinate 3',5'-cyclic GMP. Residues 545 to 802 (LLTERIIGRG…FKDIKENSFF (258 aa)) enclose the Protein kinase domain. Residues 551–559 (IGRGTFGIV) and Lys574 each bind ATP. The Proton acceptor role is filled by Asp668. One can recognise an AGC-kinase C-terminal domain in the interval 803–856 (ADFDWDRLAGRLLEPPLISKSETYAEDIDVKQIEQEEEDNANTEIDDENWDIDF). The interval 837 to 856 (QEEEDNANTEIDDENWDIDF) is disordered.

This sequence belongs to the protein kinase superfamily. AGC Ser/Thr protein kinase family. cGMP subfamily. Monomer. Requires Mg(2+) as cofactor. In terms of processing, autophosphorylated.

The protein resides in the cytoplasm. Its subcellular location is the endoplasmic reticulum membrane. It carries out the reaction L-seryl-[protein] + ATP = O-phospho-L-seryl-[protein] + ADP + H(+). The enzyme catalyses L-threonyl-[protein] + ATP = O-phospho-L-threonyl-[protein] + ADP + H(+). Its activity is regulated as follows. Activated by cGMP. Not activated by cAMP. cGMP binding allosterically triggers a conformational change at the alpha C-helix of cGMP-binding domain 4, which bridges the regulatory and catalytic domains, causing the capping triad, composed of Arg-488, Gln-536 and Asp-537, to form and stabilize the active conformation. The cGMP-binding domains acts cooperatively to activate PKG. Its function is as follows. Serine/threonine protein kinase which acts as a downstream effector of the second messenger cGMP. Controls the release of Ca(2+) from intracellular stores by regulating phosphoinositide biosynthesis. Ca(2+) signals are essential for merozoite and sporozoite invasion and egress from host hepatocytes and erythrocytes, and, in the mosquito vector, for gametocyte activation, and ookinete and sporozoite motility. During the host liver stage, regulates the initial invasion of host hepatocytes by sporozoites by regulating sporozoite motility and microneme exocytosis. Following parasite development in the hepatocytes, required for the release of merosomes, a vesicle containing the mature merozoites. During the asexual blood stage, required for the progression from schizont to the ring stage following merozoite invasion of host erythrocytes and for merozoite egress. Regulates merozoite egress by promoting the release of exonemes and micronemes which contain proteins essential for egress. Phosphorylates CDPK1 predominantly at the late schizont stage; phosphorylation at 'Ser-64' regulates CDPK1 protein-protein interaction and phosphorylation at 'Thr-231' may regulate CDPK1 kinase activity. In the mosquito vector, required for the initiation of gametogenesis induced by xanthurenic acid, specifically the gametocyte differentiation from the crescent-shaped form to the spherical form. Required for the gliding motility of ookinetes to reach and penetrate the midgut epithelium by promoting Ca(2+)-mediated activation of CDPK1 and CDPK4. Also required for microneme secretion in ookinete by promoting Ca(2+)-mediated activation of CDPK3. In Plasmodium berghei (strain Anka), this protein is cGMP-dependent protein kinase.